A 951-amino-acid polypeptide reads, in one-letter code: Valine--tRNA ligase (951 aa).

The 'HIGH' region signature appears at proline 42–histidine 52. The short motif at lysine 554 to serine 558 is the 'KMSKS' region element. Residue lysine 557 coordinates ATP. Residues alanine 880–glutamine 944 adopt a coiled-coil conformation.

It belongs to the class-I aminoacyl-tRNA synthetase family. ValS type 1 subfamily. Monomer.

Its subcellular location is the cytoplasm. The enzyme catalyses tRNA(Val) + L-valine + ATP = L-valyl-tRNA(Val) + AMP + diphosphate. Functionally, catalyzes the attachment of valine to tRNA(Val). As ValRS can inadvertently accommodate and process structurally similar amino acids such as threonine, to avoid such errors, it has a 'posttransfer' editing activity that hydrolyzes mischarged Thr-tRNA(Val) in a tRNA-dependent manner. This Shigella boydii serotype 4 (strain Sb227) protein is Valine--tRNA ligase.